The chain runs to 310 residues: Light-independent protochlorophyllide reductase iron-sulfur ATP-binding protein (310 aa).

ATP is bound by residues 53 to 58 (GIGKST) and lysine 82. Serine 57 contacts Mg(2+). [4Fe-4S] cluster is bound by residues cysteine 138 and cysteine 172. Residues 223–224 (NR) and 247–249 (PAL) contribute to the ATP site.

The protein belongs to the NifH/BchL/ChlL family. Homodimer. Protochlorophyllide reductase is composed of three subunits; BchL, BchN and BchB. The cofactor is [4Fe-4S] cluster.

It carries out the reaction chlorophyllide a + oxidized 2[4Fe-4S]-[ferredoxin] + 2 ADP + 2 phosphate = protochlorophyllide a + reduced 2[4Fe-4S]-[ferredoxin] + 2 ATP + 2 H2O. Its pathway is porphyrin-containing compound metabolism; bacteriochlorophyll biosynthesis (light-independent). Functionally, component of the dark-operative protochlorophyllide reductase (DPOR) that uses Mg-ATP and reduced ferredoxin to reduce ring D of protochlorophyllide (Pchlide) to form chlorophyllide a (Chlide). This reaction is light-independent. The L component serves as a unique electron donor to the NB-component of the complex, and binds Mg-ATP. This is Light-independent protochlorophyllide reductase iron-sulfur ATP-binding protein from Rhodopseudomonas palustris (strain BisA53).